A 154-amino-acid polypeptide reads, in one-letter code: Myoglobin (154 aa).

The 147-residue stretch at 2 to 148 (GLSDGEWQIV…FRNDIAAKYK (147 aa)) folds into the Globin domain. Serine 4 bears the Phosphoserine mark. A nitrite-binding site is contributed by histidine 65. Histidine 65 contributes to the O2 binding site. Threonine 68 is subject to Phosphothreonine. Histidine 94 contributes to the heme b binding site.

It belongs to the globin family. In terms of assembly, monomeric.

It localises to the cytoplasm. The protein resides in the sarcoplasm. The catalysed reaction is Fe(III)-heme b-[protein] + nitric oxide + H2O = Fe(II)-heme b-[protein] + nitrite + 2 H(+). The enzyme catalyses H2O2 + AH2 = A + 2 H2O. In terms of biological role, monomeric heme protein which primary function is to store oxygen and facilitate its diffusion within muscle tissues. Reversibly binds oxygen through a pentacoordinated heme iron and enables its timely and efficient release as needed during periods of heightened demand. Depending on the oxidative conditions of tissues and cells, and in addition to its ability to bind oxygen, it also has a nitrite reductase activity whereby it regulates the production of bioactive nitric oxide. Under stress conditions, like hypoxia and anoxia, it also protects cells against reactive oxygen species thanks to its pseudoperoxidase activity. The sequence is that of Myoglobin (MB) from Lycaon pictus (African wild dog).